The sequence spans 85 residues: ELKHQLLRKYGGYLGGLRQEFSKRKKKGKLPKEARQKLLHWWELHYKWPYPSETEKMALAETTGLDPKQINNWFINQRKRHWKPA.

The ELK domain maps to 1-21 (ELKHQLLRKYGGYLGGLRQEF). The homeobox; TALE-type DNA-binding region spans 22–85 (SKRKKKGKLP…NQRKRHWKPA (64 aa)).

It belongs to the TALE/KNOX homeobox family. As to expression, strongly expressed in ear inflorescence primordia and shoot meristem. Weakly expressed in embryos. Absent from leaves.

It localises to the nucleus. Probably binds to the DNA sequence 5'-TGAC-3'. This Zea mays (Maize) protein is Homeobox protein knotted-1-like 8 (KNOX8).